The chain runs to 169 residues: Ribonuclease H (169 aa).

The region spanning 3-159 (AHAALTLYTD…CDRLATDAAR (157 aa)) is the RNase H type-1 domain. Mg(2+) contacts are provided by aspartate 12, glutamate 63, aspartate 87, and aspartate 151.

The protein belongs to the RNase H family. Monomer. It depends on Mg(2+) as a cofactor.

It localises to the cytoplasm. The catalysed reaction is Endonucleolytic cleavage to 5'-phosphomonoester.. Endonuclease that specifically degrades the RNA of RNA-DNA hybrids. This Treponema pallidum subsp. pallidum (strain SS14) protein is Ribonuclease H.